A 180-amino-acid chain; its full sequence is MFPMLNGFMNYGQQTVRAARYIGQSFMITLSHTNRLPVTIQYPYEKSITSERFRGRIHFEFDKCIACEVCVRVCPIDLPVVDWRLETDIRKKRLLNYSIDFGICIFCGNCVEYCPTNCLSMTEEYELSTYDRHELNYNQISLGRLPMSVIGDYTIQTIMNSTQMKIAMDKSLDSRTITNY.

4Fe-4S ferredoxin-type domains are found at residues 55–84 (GRIH…VDWR) and 95–124 (LNYS…MTEE). Positions 64, 67, 70, 74, 104, 107, 110, and 114 each coordinate [4Fe-4S] cluster.

It belongs to the complex I 23 kDa subunit family. NDH is composed of at least 16 different subunits, 5 of which are encoded in the nucleus. [4Fe-4S] cluster is required as a cofactor.

It is found in the plastid. Its subcellular location is the chloroplast thylakoid membrane. It carries out the reaction a plastoquinone + NADH + (n+1) H(+)(in) = a plastoquinol + NAD(+) + n H(+)(out). It catalyses the reaction a plastoquinone + NADPH + (n+1) H(+)(in) = a plastoquinol + NADP(+) + n H(+)(out). In terms of biological role, NDH shuttles electrons from NAD(P)H:plastoquinone, via FMN and iron-sulfur (Fe-S) centers, to quinones in the photosynthetic chain and possibly in a chloroplast respiratory chain. The immediate electron acceptor for the enzyme in this species is believed to be plastoquinone. Couples the redox reaction to proton translocation, and thus conserves the redox energy in a proton gradient. This chain is NAD(P)H-quinone oxidoreductase subunit I, chloroplastic, found in Illicium oligandrum (Star anise).